The sequence spans 457 residues: MTTDEGAKNNGESPTATVAEQGEDITSKKDRGVLKIVKRVGNGEETPMIGDKVYVHYKGKLSNGKKFDSSHDRNEPFVFSLGKGQVIKAWDIGVATMKKGEICHLLCKPEYAYGSAGSLPKIPSNATLFFEIELLDFKGEDLFEDGGIIRRTKRKGEGYSNPNEGATVEIHLEGRCGGRMFDCRDVAFTVGEGEDHVIPIGIDKALEKMQREEQCILYLGPRYGFGEAGKPKFGIEPNAELIYEVTLKSFEKAKESWEMDTKEKLEQAAIVKEKGTVYFKGGKYMQAVIQYGKIVSWLEMEYGLSEKESKASESFLLAAFLNLAMCYSKLREYTKAVECCDKALGLDSANGKGLYRRGEAQLLMNEFESAKGDFEKVLEVNPQNKAARLQISMCQKKAKEHNERDRRIYANMFKKFAEQDAKEEANKAMGKKTSEGVTNEKGTDSQAMEEEKPEGHV.

An N-acetylmethionine modification is found at M1. Positions 1–26 (MTTDEGAKNNGESPTATVAEQGEDIT) are disordered. Position 13 is a phosphoserine (S13). PPIase FKBP-type domains follow at residues 50-138 (GDKV…LDFK) and 165-251 (GATV…KSFE). TPR repeat units lie at residues 268 to 301 (AAIVKEKGTVYFKGGKYMQAVIQYGKIVSWLEME), 317 to 350 (LAAFLNLAMCYSKLREYTKAVECCDKALGLDSAN), and 351 to 384 (GKGLYRRGEAQLLMNEFESAKGDFEKVLEVNPQN). The segment at 420-457 (DAKEEANKAMGKKTSEGVTNEKGTDSQAMEEEKPEGHV) is disordered. S445 carries the post-translational modification Phosphoserine.

As to quaternary structure, part of a heteromultimeric cytoplasmic complex with HSP90AA1, HSPA1A/HSPA1B and steroid receptors. Upon ligand binding dissociates from the complex and FKBP4 takes its place. Interacts with functionally mature heterooligomeric progesterone receptor complexes along with HSP90 and TEBP. Interacts with IFI44L; this interaction modulates the kinase activity of IKBKB and IKBKE. Interacts with IKBKB and IKBKE.

It localises to the cytoplasm. It is found in the nucleus. The catalysed reaction is [protein]-peptidylproline (omega=180) = [protein]-peptidylproline (omega=0). Inhibited by FK506 but not cyclosporin. Functionally, immunophilin protein with PPIase and co-chaperone activities. Component of unligated steroid receptors heterocomplexes through interaction with heat-shock protein 90 (HSP90). Plays a role in the intracellular trafficking of heterooligomeric forms of steroid hormone receptors maintaining the complex into the cytoplasm when unliganded. Acts as a regulator of Akt/AKT1 activity by promoting the interaction between Akt/AKT1 and PHLPP1, thereby enhancing dephosphorylation and subsequent activation of Akt/AKT1. Interacts with IKBKE and IKBKB which facilitates IKK complex assembly leading to increased IKBKE and IKBKB kinase activity, NF-kappaB activation, and IFN production. The protein is Peptidyl-prolyl cis-trans isomerase FKBP5 (FKBP5) of Pongo abelii (Sumatran orangutan).